Reading from the N-terminus, the 878-residue chain is NUT family member 2B (878 aa).

Disordered stretches follow at residues Trp-273–Cys-324, Gln-417–Ile-512, Leu-527–Pro-560, Pro-624–Arg-693, Leu-709–Glu-757, and Trp-775–Gln-878. 2 stretches are compositionally biased toward pro residues: residues Pro-278–Gln-288 and Cys-427–Pro-444. Residues Thr-476 to Arg-487 are compositionally biased toward basic residues. A compositionally biased stretch (basic and acidic residues) spans Glu-537–Gln-551.

The protein belongs to the NUT family.

The sequence is that of NUT family member 2B (NUTM2B) from Homo sapiens (Human).